Consider the following 326-residue polypeptide: MVWQRQHVLGLADFTPEEYQMVLQTSASFQEVLTRRLPKVPTLQGKVVVTLFFEPSTRTRTSFELAAKRLSADVLNFSPGTSSLSKGETLLDTARTFLAMGSDLLIVRHAQAGVPQQLAAEIDRRGSPVGVLNAGDGLHEHPTQGLLDLFTLCSHLDPRRPRLELLQGIKIAIVGDILHSRVARSDIYALVAAGAEVHLAGPPTLLPKDFAQFVPGHTLPIHWQLEPALEGARFVITLRLQQERMGEFLLPSLQEYHHFFGLTRQRLRLCHPEVRVLHPGPVNRGVELSSEVMEDPGLNLIEQQVTHGVAVRMALLYLMGGGRIPA.

2 residues coordinate carbamoyl phosphate: Arg-58 and Thr-59. Lys-86 provides a ligand contact to L-aspartate. Carbamoyl phosphate is bound by residues Arg-108, His-141, and Gln-144. Residues Arg-181 and Arg-239 each contribute to the L-aspartate site. Carbamoyl phosphate is bound by residues Gly-280 and Pro-281.

The protein belongs to the aspartate/ornithine carbamoyltransferase superfamily. ATCase family. Heterododecamer (2C3:3R2) of six catalytic PyrB chains organized as two trimers (C3), and six regulatory PyrI chains organized as three dimers (R2).

It carries out the reaction carbamoyl phosphate + L-aspartate = N-carbamoyl-L-aspartate + phosphate + H(+). Its pathway is pyrimidine metabolism; UMP biosynthesis via de novo pathway; (S)-dihydroorotate from bicarbonate: step 2/3. Catalyzes the condensation of carbamoyl phosphate and aspartate to form carbamoyl aspartate and inorganic phosphate, the committed step in the de novo pyrimidine nucleotide biosynthesis pathway. This is Aspartate carbamoyltransferase catalytic subunit from Synechococcus sp. (strain JA-2-3B'a(2-13)) (Cyanobacteria bacterium Yellowstone B-Prime).